A 977-amino-acid polypeptide reads, in one-letter code: SLIT and NTRK-like protein 3 (977 aa).

The N-terminal stretch at 1-26 is a signal peptide; that stretch reads MKPSIAEMLHRGRMLWIILLSTIALG. Over 29-654 the chain is Extracellular; the sequence is TPIPLIEDSE…SPPGGPVPLS (626 aa). The N-linked (GlcNAc...) asparagine glycan is linked to Asn-68. 6 LRR repeats span residues 78 to 99, 102 to 123, 126 to 147, 150 to 171, 174 to 195, and 197 to 218; these read RPFK…SFLH, NAVS…AFNG, ILKR…TFLG, SLEY…AFRN, KLRV…LFKA, and SLTH…GMLD. One can recognise an LRRCT 1 domain in the interval 232–283; the sequence is NPWNCTCEIVQLKSWLERIPYTALVGDITCETPFHFHGKDLREIRKTELCPL. The tract at residues 325–360 is disordered; that stretch reads EYKSSNKQPKPTKQPRTPRPPSTSQALYPGPNQPPI. The LRRNT domain occupies 364-406; that stretch reads QTRPPIPIICPTGCTCNLHINDLGLTVNCKERGFNNISELLPR. LRR repeat units follow at residues 409-430, 433-454, 457-478, 481-502, 505-526, and 528-549; these read NAKK…DFWN, SLDL…AFIN, NLKS…MFRG, SLHY…AFSL, NLKL…AFAG, and SLAR…GVLE. Residues 562–613 enclose the LRRCT 2 domain; the sequence is NPWDCTCDLVPFKQWIETISSVSVVGDVLCRSPENLTHRDVRTIELEVLCPE. Asn-596 carries N-linked (GlcNAc...) asparagine glycosylation. The helical transmembrane segment at 655 to 675 threads the bilayer; the sequence is VLILSLLVLFFSAVFVAAGLF. Over 676–977 the chain is Cytoplasmic; the sequence is AYVLRRRRKK…EVLEKTTYRF (302 aa). Disordered stretches follow at residues 708 to 735 and 761 to 790; these read LFED…KAPP and EEEV…MGEA. A compositionally biased stretch (gly residues) spans 711–724; the sequence is DGGGGGGGSGGGGR. Residues 765 to 775 are compositionally biased toward low complexity; it reads AVSSAQEAGSA.

Belongs to the SLITRK family. In terms of tissue distribution, expressed in the occipital lobe of the cerebral cortex of the brain. Expressed at higher levels in some astrocytic brain tumors such as astrocytomas, oligodendrogliomas, glioblastomas, gangliogliomas and primitive neuroectodermal tumors.

It localises to the membrane. Suppresses neurite outgrowth. This Homo sapiens (Human) protein is SLIT and NTRK-like protein 3 (SLITRK3).